A 231-amino-acid chain; its full sequence is Phosphoglycolate phosphatase (231 aa).

Asp-9 functions as the Nucleophile in the catalytic mechanism. Residues Asp-9 and Asp-11 each contribute to the Mg(2+) site. Asp-11 serves as the catalytic Proton donor. A substrate-binding site is contributed by Lys-154. 2 residues coordinate Mg(2+): Asp-177 and Asp-181.

It belongs to the archaeal SPP-like hydrolase family. In terms of assembly, homodimer. Requires Mg(2+) as cofactor.

The enzyme catalyses 2-phosphoglycolate + H2O = glycolate + phosphate. Its function is as follows. Catalyzes the dephosphorylation of 2-phosphoglycolate. Has phosphatase activity towards p-nitrophenylphosphate (in vitro). This is Phosphoglycolate phosphatase from Pyrococcus horikoshii (strain ATCC 700860 / DSM 12428 / JCM 9974 / NBRC 100139 / OT-3).